A 340-amino-acid chain; its full sequence is Phosphate carrier protein, mitochondrial (340 aa).

Residues 1 to 27 constitute a mitochondrion transit peptide; sequence MSVFSQLAESSKQNPFSLPVRSGNCAS. Solcar repeat units follow at residues 41–125, 138–222, and 239–317; these read KYYA…FKNV, YRTS…TVEA, and EQLV…VKVA. Transmembrane regions (helical) follow at residues 47-67, 95-114, 141-161, 200-220, 241-261, and 297-317; these read ALGG…LDLV, RALV…QGLG, SLYL…LAPM, PLWM…EKTV, LVVT…VSHP, and IIMI…VKVA.

The protein belongs to the mitochondrial carrier (TC 2.A.29) family.

It is found in the mitochondrion inner membrane. Its function is as follows. Transport of phosphate groups from the cytosol to the mitochondrial matrix. The polypeptide is Phosphate carrier protein, mitochondrial (Caenorhabditis elegans).